A 233-amino-acid polypeptide reads, in one-letter code: Biosynthetic peptidoglycan transglycosylase (233 aa).

A helical transmembrane segment spans residues 8–28; the sequence is LIALPVGIFIFFNAYVYGNII.

This sequence belongs to the glycosyltransferase 51 family.

It is found in the cell inner membrane. The catalysed reaction is [GlcNAc-(1-&gt;4)-Mur2Ac(oyl-L-Ala-gamma-D-Glu-L-Lys-D-Ala-D-Ala)](n)-di-trans,octa-cis-undecaprenyl diphosphate + beta-D-GlcNAc-(1-&gt;4)-Mur2Ac(oyl-L-Ala-gamma-D-Glu-L-Lys-D-Ala-D-Ala)-di-trans,octa-cis-undecaprenyl diphosphate = [GlcNAc-(1-&gt;4)-Mur2Ac(oyl-L-Ala-gamma-D-Glu-L-Lys-D-Ala-D-Ala)](n+1)-di-trans,octa-cis-undecaprenyl diphosphate + di-trans,octa-cis-undecaprenyl diphosphate + H(+). Its pathway is cell wall biogenesis; peptidoglycan biosynthesis. In terms of biological role, peptidoglycan polymerase that catalyzes glycan chain elongation from lipid-linked precursors. This Neisseria gonorrhoeae (strain ATCC 700825 / FA 1090) protein is Biosynthetic peptidoglycan transglycosylase.